The primary structure comprises 117 residues: Large ribosomal subunit protein bL20c (117 aa).

Belongs to the bacterial ribosomal protein bL20 family.

The protein resides in the plastid. It is found in the chloroplast. Its function is as follows. Binds directly to 23S ribosomal RNA and is necessary for the in vitro assembly process of the 50S ribosomal subunit. It is not involved in the protein synthesizing functions of that subunit. This is Large ribosomal subunit protein bL20c from Arabis hirsuta (Hairy rock-cress).